A 214-amino-acid polypeptide reads, in one-letter code: MRIILLGAPGAGKGTQAQFIMEQYGIPQISTGDMLRAAVKAGTPLGLEAKKVMDAGQLVSDDLIIGLVKERIAQEDCVKGFLLDGFPRTIPQADAMAANGISIDHVIEIDVPDEEIVKRMSGRRVHPGSGRVYHVVFNPPKVEGKDDVTGEDLAIRPDDEESTVRKRLAIYHEQTKPLVEYYGKVAAAGQTQYNKFDGTQSVAAVSEQLASVLK.

10 to 15 (GAGKGT) provides a ligand contact to ATP. Residues 30–59 (STGDMLRAAVKAGTPLGLEAKKVMDAGQLV) form an NMP region. Residues Thr31, Arg36, 57–59 (QLV), 85–88 (GFPR), and Gln92 each bind AMP. An LID region spans residues 122–159 (GRRVHPGSGRVYHVVFNPPKVEGKDDVTGEDLAIRPDD). Residues Arg123 and 132–133 (VY) contribute to the ATP site. Residues Arg156 and Arg167 each coordinate AMP. Gln200 contributes to the ATP binding site.

This sequence belongs to the adenylate kinase family. In terms of assembly, monomer.

The protein resides in the cytoplasm. It catalyses the reaction AMP + ATP = 2 ADP. The protein operates within purine metabolism; AMP biosynthesis via salvage pathway; AMP from ADP: step 1/1. In terms of biological role, catalyzes the reversible transfer of the terminal phosphate group between ATP and AMP. Plays an important role in cellular energy homeostasis and in adenine nucleotide metabolism. This Shewanella baltica (strain OS155 / ATCC BAA-1091) protein is Adenylate kinase.